The following is a 101-amino-acid chain: Interleukin-8 (101 aa).

The signal sequence occupies residues 1 to 22; the sequence is MTSKLAIALLAAFLLSAALCKA. Arginine 27 bears the Citrulline mark. 2 disulfide bridges follow: cysteine 34–cysteine 61 and cysteine 36–cysteine 77.

This sequence belongs to the intercrine alpha (chemokine CxC) family. Homodimer. In terms of processing, citrullination at Arg-27 prevents proteolysis, and dampens tissue inflammation, it also enhances leukocytosis, possibly through impaired chemokine clearance from the blood circulation.

It localises to the secreted. Functionally, chemotactic factor that mediates inflammatory response by attracting neutrophils, basophils, and T-cells to clear pathogens and protect the host from infection. Also plays an important role in neutrophil activation. Released in response to an inflammatory stimulus, exerts its effect by binding to the G-protein-coupled receptors CXCR1 and CXCR2, primarily found in neutrophils, monocytes and endothelial cells. G-protein heterotrimer (alpha, beta, gamma subunits) constitutively binds to CXCR1/CXCR2 receptor and activation by IL8 leads to beta and gamma subunits release from Galpha (GNAI2 in neutrophils) and activation of several downstream signaling pathways including PI3K and MAPK pathways. The sequence is that of Interleukin-8 (CXCL8) from Tursiops truncatus (Atlantic bottle-nosed dolphin).